The chain runs to 853 residues: EF-hand domain-containing family member B (853 aa).

2 disordered regions span residues 1–31 and 244–266; these read MCSF…TRAP and AQQP…PGNI. EF-hand domains follow at residues 581-616 and 617-652; these read QNFD…ANLH and LDKM…KDRI. The Ca(2+) site is built by Asp-594, Asp-598, Glu-605, Asp-630, Asp-632, Asp-634, and Glu-641.

As to quaternary structure, microtubule inner protein component of sperm flagellar doublet microtubules. Interacts with STIM1 and ORAI1; the interactions take place upon Ca(2+)-store depletion and dissociate through a Ca(2+)-dependent mechanism. Interaction with STIM1 inhibits STIM1 interaction with SARAF.

It is found in the cytoplasm. The protein resides in the cytoskeleton. It localises to the cilium axoneme. The protein localises to the flagellum axoneme. In terms of biological role, microtubule inner protein (MIP) part of the dynein-decorated doublet microtubules (DMTs) in cilia axoneme, which is required for motile cilia beating. Cytosolic sensor for calcium, modulates the interaction of STIM1 and ORAI1 upon store depletion and the activation of store-operated Ca(2+) entry (SOCE) and NFAT translocation from cytosol to nucleus. The sequence is that of EF-hand domain-containing family member B from Mus musculus (Mouse).